A 225-amino-acid chain; its full sequence is MPSTKFKGYFITIEGGEGSGKSTLLNQLGDYFRNKGFEVIQTREPGGTKLGESIRHLLLNHEDSISIGHQAELLLFLAARAQHIEELIQPALKAGKIVLCDRFNDSTIAYQGAARGLNAKKIQEFCQLVCAEILPNWTLFLDVSPEIGLARTQKIQKVHAQMGQLDRIESEKIEFHERVRQAFLSLVQQEPQRIYRIDANESQSKVLQKALEFLEEQWSDSELKT.

15 to 22 lines the ATP pocket; that stretch reads GGEGSGKS.

This sequence belongs to the thymidylate kinase family.

It carries out the reaction dTMP + ATP = dTDP + ADP. Its function is as follows. Phosphorylation of dTMP to form dTDP in both de novo and salvage pathways of dTTP synthesis. This chain is Thymidylate kinase, found in Protochlamydia amoebophila (strain UWE25).